Reading from the N-terminus, the 224-residue chain is Envelope glycoprotein L (224 aa).

Residues 1–19 form the signal peptide; sequence MGILGWVGLIAVGVLCVRG. The interval 20–161 is interaction with gH; it reads GLPSTEYVIR…FDYSRTRRCV (142 aa). The region spanning 23-201 is the gL alphaherpesvirus-type domain; sequence STEYVIRSRV…LTTPPPIIAT (179 aa). Cystine bridges form between C44/C76 and C149/C160. The disordered stretch occupies residues 161 to 224; the sequence is VGRQDLGPTN…RRRRPHSRRL (64 aa). The segment covering 213 to 224 has biased composition (basic residues); that stretch reads KSRRRRPHSRRL.

Belongs to the herpesviridae glycoprotein L (gL) family. Alphaherpesvirinae gL subfamily. As to quaternary structure, interacts with glycoprotein H (gH); this interaction is necessary for the correct processing and cell surface expression of gH. The heterodimer gH/gL seems to interact with gB trimers during fusion.

It localises to the virion membrane. The protein localises to the host cell membrane. The protein resides in the host Golgi apparatus. Its subcellular location is the host trans-Golgi network. Its function is as follows. The heterodimer glycoprotein H-glycoprotein L is required for the fusion of viral and plasma membranes leading to virus entry into the host cell. Acts as a functional inhibitor of gH and maintains gH in an inhibited form. Upon binding to host integrins, gL dissociates from gH leading to activation of the viral fusion glycoproteins gB and gH. The protein is Envelope glycoprotein L of Human herpesvirus 1 (strain 17) (HHV-1).